A 624-amino-acid chain; its full sequence is Coagulation factor XI (624 aa).

The signal sequence occupies residues 1–18; it reads MTSLHQVLYFIFFASVSS. Apple domains are found at residues 20-103, 110-193, 200-283, and 291-376; these read CVTK…FKQC, CSKD…LKSC, CIRD…LQHC, and CHPS…LRLC. Cystine bridges form between Cys20-Cys103, Cys46-Cys76, Cys50-Cys56, Cys110-Cys193, Cys136-Cys165, Cys140-Cys146, Cys200-Cys283, Cys226-Cys255, Cys230-Cys236, Cys291-Cys376, Cys317-Cys348, Cys321-Cys327, Cys382-Cys499, Cys415-Cys431, Cys513-Cys580, Cys544-Cys559, and Cys570-Cys598. N-linked (GlcNAc...) asparagine glycosylation is found at Asn90 and Asn126. A glycan (N-linked (GlcNAc...) asparagine) is linked at Asn297. In terms of domain architecture, Peptidase S1 spans 390–622; that stretch reads VVGGAASVHG…YVDWILEKTQ (233 aa). The active-site Charge relay system is the His430. N-linked (GlcNAc...) asparagine glycosylation occurs at Asn449. Asp479 acts as the Charge relay system in catalysis. The N-linked (GlcNAc...) asparagine glycan is linked to Asn490. 547–550 contributes to the heparin binding site; sequence RYRR. Ser574 (charge relay system) is an active-site residue.

This sequence belongs to the peptidase S1 family. Plasma kallikrein subfamily. As to quaternary structure, homodimer; disulfide-linked. After activation the heavy and light chains are also linked by a disulfide bond. Interacts (activated) with F9 (inactive and activated) in calcium-dependent manner. Forms a heterodimer with SERPINA5. In terms of processing, activated by factor XIIa (or XII), which cleaves each polypeptide after Arg-389 into the light chain, which contains the active site, and the heavy chain, which associates with high molecular weight (HMW) kininogen. Activated by F12 (activated); the presence of negatively charged surfaces accelerates activation. Activated by F2 (thrombin); the presence of negatively charged surfaces, such as polyphosphate and dextran sulfate, strongly accelerates activation. Autoactivated; the presence of negatively charged surfaces, such as polyphosphate and dextran sulfate, accelerates autoactivation and autolysis. Post-translationally, N-glycosylated on both chains. N-glycosylated sites mainly consist of nonfucosylated sialylated biantennary (in high abundance) and/or triantennary (in low abundance) complex structures.

The protein resides in the secreted. The catalysed reaction is Selective cleavage of Arg-|-Ala and Arg-|-Val bonds in factor IX to form factor IXa.. With respect to regulation, inhibited by SERPINA5. In terms of biological role, factor XI triggers the middle phase of the intrinsic pathway of blood coagulation by activating factor IX. In Mus musculus (Mouse), this protein is Coagulation factor XI (F11).